Consider the following 257-residue polypeptide: 5-oxoprolinase subunit A (257 aa).

It belongs to the LamB/PxpA family. As to quaternary structure, forms a complex composed of PxpA, PxpB and PxpC.

The enzyme catalyses 5-oxo-L-proline + ATP + 2 H2O = L-glutamate + ADP + phosphate + H(+). Functionally, catalyzes the cleavage of 5-oxoproline to form L-glutamate coupled to the hydrolysis of ATP to ADP and inorganic phosphate. The sequence is that of 5-oxoprolinase subunit A from Pectobacterium atrosepticum (strain SCRI 1043 / ATCC BAA-672) (Erwinia carotovora subsp. atroseptica).